A 159-amino-acid chain; its full sequence is MINSEFSIEEHVKYAERLQDERGLTKEDADEEAFRVQLNEVAVINRAIDVGINVSEEEAFQKSQETREDLENEEAENVKEVLIGIQEEIEQLGISEDDYWNEYMLSSYAHAVMREKLMEYEQNENPMKNWNELQQEIIEEFTVSQSQQINEFKREIGMR.

This Alkalihalophilus pseudofirmus (strain ATCC BAA-2126 / JCM 17055 / OF4) (Bacillus pseudofirmus) protein is Glutamate-rich protein GrpA (grpA).